The chain runs to 79 residues: Acyl carrier protein (79 aa).

One can recognise a Carrier domain in the interval 6–79 (KEILDGLAEI…VQDVINYIQK (74 aa)). Position 41 is an O-(pantetheine 4'-phosphoryl)serine (Ser-41).

Belongs to the acyl carrier protein (ACP) family. In terms of processing, 4'-phosphopantetheine is transferred from CoA to a specific serine of apo-ACP by AcpS. This modification is essential for activity because fatty acids are bound in thioester linkage to the sulfhydryl of the prosthetic group.

The protein resides in the cytoplasm. It functions in the pathway lipid metabolism; fatty acid biosynthesis. Its function is as follows. Carrier of the growing fatty acid chain in fatty acid biosynthesis. The polypeptide is Acyl carrier protein (Thermobifida fusca (strain YX)).